The following is a 277-amino-acid chain: SPX domain-containing protein 3 (277 aa).

The region spanning 1–152 is the SPX domain; that stretch reads MKFGKRLKKQ…GRLLRLPFIE (152 aa).

The sequence is that of SPX domain-containing protein 3 (SPX3) from Oryza sativa subsp. indica (Rice).